A 182-amino-acid polypeptide reads, in one-letter code: UPF0397 protein BA_2640/GBAA_2640/BAS2460 (182 aa).

Transmembrane regions (helical) follow at residues V9–I29, A40–I60, W71–I91, I114–V134, and I142–L162.

This sequence belongs to the UPF0397 family.

The protein localises to the cell membrane. This chain is UPF0397 protein BA_2640/GBAA_2640/BAS2460, found in Bacillus anthracis.